Here is a 92-residue protein sequence, read N- to C-terminus: Putative septation protein SpoVG (92 aa).

It belongs to the SpoVG family.

Functionally, could be involved in septation. This chain is Putative septation protein SpoVG, found in Thermoanaerobacter sp. (strain X514).